A 283-amino-acid polypeptide reads, in one-letter code: Phosphatidylglycerol--prolipoprotein diacylglyceryl transferase (283 aa).

Transmembrane regions (helical) follow at residues 17–37, 56–76, and 92–112; these read LAVR…TFLG, FLTW…VLFY, and WEGG…IWLF. R139 lines the a 1,2-diacyl-sn-glycero-3-phospho-(1'-sn-glycerol) pocket. Helical transmembrane passes span 222–242 and 255–275; these read GQTA…AEFA and GLSM…VGFV.

This sequence belongs to the Lgt family.

Its subcellular location is the cell inner membrane. The enzyme catalyses L-cysteinyl-[prolipoprotein] + a 1,2-diacyl-sn-glycero-3-phospho-(1'-sn-glycerol) = an S-1,2-diacyl-sn-glyceryl-L-cysteinyl-[prolipoprotein] + sn-glycerol 1-phosphate + H(+). Its pathway is protein modification; lipoprotein biosynthesis (diacylglyceryl transfer). Functionally, catalyzes the transfer of the diacylglyceryl group from phosphatidylglycerol to the sulfhydryl group of the N-terminal cysteine of a prolipoprotein, the first step in the formation of mature lipoproteins. This is Phosphatidylglycerol--prolipoprotein diacylglyceryl transferase from Neisseria gonorrhoeae (strain ATCC 700825 / FA 1090).